The primary structure comprises 426 residues: MYVLKNGQILNESGELENKDVLIQNGKVNLIADSIEVTSGEEFDATGKLIAPGFIDVHVHLREPGGEHKETILTGTKAAARGGYTTICSMPNTKPVPDSKEVMERLQAKIKETAEVRVLPYASITTSLGTDELVDFEALKEAGAFAFTDDGVGVQLAGTMYEAMKRAAALDMAIVAHCEDNSLIYGGVVHDGIFAEREGLKGIPNIAESVQIARDVLLAEAAGCHYHVCHISTKESVRVVRDAKRAGIRVTAEVSPHHLILDEEAIPGNDGQWKMNPPLRSKADRAALLEGLLDGTIDFIATDHAPHAAEEKNVPMEQAAFGIVGLETAFPLLYTHFVQTNEWTLKQLIDWMTVKPAECFKLPYGKLEEGTTADIVVLDLEKEATIDPDTFYSKGKNTPFVGETCIGWPVATFVEGTLVYKEGESK.

Residues H58 and H60 each contribute to the Zn(2+) site. Residues 60–62 (HLR) and N92 each bind substrate. Positions 150, 177, and 230 each coordinate Zn(2+). Position 276 (N276) interacts with substrate. D303 is a binding site for Zn(2+). Residue D303 is part of the active site. Substrate is bound by residues H307 and 321–322 (FG).

This sequence belongs to the metallo-dependent hydrolases superfamily. DHOase family. Class I DHOase subfamily. Zn(2+) serves as cofactor.

The enzyme catalyses (S)-dihydroorotate + H2O = N-carbamoyl-L-aspartate + H(+). It functions in the pathway pyrimidine metabolism; UMP biosynthesis via de novo pathway; (S)-dihydroorotate from bicarbonate: step 3/3. In terms of biological role, catalyzes the reversible cyclization of carbamoyl aspartate to dihydroorotate. The protein is Dihydroorotase of Listeria welshimeri serovar 6b (strain ATCC 35897 / DSM 20650 / CCUG 15529 / CIP 8149 / NCTC 11857 / SLCC 5334 / V8).